Consider the following 262-residue polypeptide: Probable proteasome subunit beta type-7 (262 aa).

Belongs to the peptidase T1B family. As to quaternary structure, the 26S proteasome consists of a 20S proteasome core and two 19S regulatory subunits. The 20S proteasome core is composed of 28 subunits that are arranged in four stacked rings, resulting in a barrel-shaped structure. The two end rings are each formed by seven alpha subunits, and the two central rings are each formed by seven beta subunits. The catalytic chamber with the active sites is on the inside of the barrel.

It localises to the cytoplasm. The protein resides in the nucleus. Functionally, non-catalytic component of the proteasome, a multicatalytic proteinase complex which is characterized by its ability to cleave peptides with Arg, Phe, Tyr, Leu, and Glu adjacent to the leaving group at neutral or slightly basic pH. The proteasome has an ATP-dependent proteolytic activity. This is Probable proteasome subunit beta type-7 from Schizosaccharomyces pombe (strain 972 / ATCC 24843) (Fission yeast).